The following is a 339-amino-acid chain: UDP-3-O-acylglucosamine N-acyltransferase (339 aa).

His-239 serves as the catalytic Proton acceptor.

Belongs to the transferase hexapeptide repeat family. LpxD subfamily. Homotrimer.

It catalyses the reaction a UDP-3-O-[(3R)-3-hydroxyacyl]-alpha-D-glucosamine + a (3R)-hydroxyacyl-[ACP] = a UDP-2-N,3-O-bis[(3R)-3-hydroxyacyl]-alpha-D-glucosamine + holo-[ACP] + H(+). The protein operates within bacterial outer membrane biogenesis; LPS lipid A biosynthesis. Catalyzes the N-acylation of UDP-3-O-acylglucosamine using 3-hydroxyacyl-ACP as the acyl donor. Is involved in the biosynthesis of lipid A, a phosphorylated glycolipid that anchors the lipopolysaccharide to the outer membrane of the cell. The protein is UDP-3-O-acylglucosamine N-acyltransferase of Aliivibrio fischeri (strain ATCC 700601 / ES114) (Vibrio fischeri).